A 34-amino-acid chain; its full sequence is Photosystem II reaction center protein Psb30 (34 aa).

A helical transmembrane segment spans residues 6-26 (VVFQLMALFFVLAAGPAVVVL).

This sequence belongs to the Psb30/Ycf12 family. PSII is composed of 1 copy each of membrane proteins PsbA, PsbB, PsbC, PsbD, PsbE, PsbF, PsbH, PsbI, PsbJ, PsbK, PsbL, PsbM, PsbT, PsbX, PsbY, PsbZ, Psb30/Ycf12, peripheral proteins of the oxygen-evolving complex and a large number of cofactors. It forms dimeric complexes.

The protein resides in the plastid. Its subcellular location is the chloroplast thylakoid membrane. Its function is as follows. A core subunit of photosystem II (PSII), probably helps stabilize the reaction center. This Stigeoclonium helveticum (Green alga) protein is Photosystem II reaction center protein Psb30.